We begin with the raw amino-acid sequence, 210 residues long: MKFLNQEKRKQLLNERHSCKMFDKHYTFSSEELEEIAEIARLSPSSYNTQPWHFVMVTNKDLKNQIAAHSYFNKDMIESASALVVVCSLKPVELLPNGHYMQNLYDEPYRSRTLLSFAQMLDLRFNHSMQKLESYILEQCYIAVGQICLGVSLMGLDSCIIGGFDALKVGEVLSQRINDPKIACLIALGKRVKEASQKSRKPKNHAITWL.

150–155 (GVSLMG) contacts NADP(+).

It belongs to the nitroreductase family.

In terms of biological role, reduction of a variety of nitroaromatic compounds using NADPH as source of reducing equivalents; two electrons are transferred. In Helicobacter acinonychis (strain Sheeba), this protein is Oxygen-insensitive NADPH nitroreductase (rdxA).